A 449-amino-acid polypeptide reads, in one-letter code: Glycosyl hydrolase-like protein 1 (449 aa).

Residues Gln-22, His-119, 164–165 (NE), Tyr-292, Glu-350, Trp-393, and Tyr-406 contribute to the a beta-D-glucoside site. Glu-165 functions as the Proton donor in the catalytic mechanism. The active-site Nucleophile is Glu-350.

It belongs to the glycosyl hydrolase 1 family. As to expression, mainly expressed in flowers, flower buds and young leaves, and, to a lesser extent, in old leaves, stems and roots.

It localises to the cytoplasm. The protein operates within secondary metabolite biosynthesis; terpenoid biosynthesis. Functionally, component of the oleanane-type triterpene saponins (e.g. saponarioside A and saponarioside B) biosynthetic pathway, leading to the production of natural products with detergent properties used as traditional sources of soap. Beta-glycosidase that catalyzes the transfer of glucose moiety to QA-triFRXX to produce QA-triF(Q)RXX via the elongation of the C-28 sugar chain with a D-quinovose. The polypeptide is Glycosyl hydrolase-like protein 1 (Saponaria officinalis (Common soapwort)).